Here is a 132-residue protein sequence, read N- to C-terminus: MPQQPTKRTGGVRKQKRNVPNGVAHIQSTFNNTIVTISDVAGEVISWASAGSSGFKGAKKGTPFAAQTAAESAARRAIDQGMRQIEVMVSGPGAGRETAIRALQGAGLEITLIRDVTPIPHNGCRPPKRRRV.

Belongs to the universal ribosomal protein uS11 family. Part of the 30S ribosomal subunit. Interacts with proteins S7 and S18. Binds to IF-3.

In terms of biological role, located on the platform of the 30S subunit, it bridges several disparate RNA helices of the 16S rRNA. Forms part of the Shine-Dalgarno cleft in the 70S ribosome. The protein is Small ribosomal subunit protein uS11 of Cyanothece sp. (strain PCC 7425 / ATCC 29141).